The chain runs to 236 residues: DNA repair protein RecO (236 aa).

The protein belongs to the RecO family.

Functionally, involved in DNA repair and RecF pathway recombination. This chain is DNA repair protein RecO, found in Stutzerimonas stutzeri (strain A1501) (Pseudomonas stutzeri).